We begin with the raw amino-acid sequence, 292 residues long: Acetyl-coenzyme A carboxylase carboxyl transferase subunit beta (292 aa).

A CoA carboxyltransferase N-terminal domain is found at methionine 36–glutamate 292. Zn(2+) is bound by residues cysteine 40, cysteine 43, cysteine 59, and cysteine 62. The C4-type zinc finger occupies cysteine 40–cysteine 62.

Belongs to the AccD/PCCB family. As to quaternary structure, acetyl-CoA carboxylase is a heterohexamer composed of biotin carboxyl carrier protein (AccB), biotin carboxylase (AccC) and two subunits each of ACCase subunit alpha (AccA) and ACCase subunit beta (AccD). The cofactor is Zn(2+).

The protein resides in the cytoplasm. The catalysed reaction is N(6)-carboxybiotinyl-L-lysyl-[protein] + acetyl-CoA = N(6)-biotinyl-L-lysyl-[protein] + malonyl-CoA. It functions in the pathway lipid metabolism; malonyl-CoA biosynthesis; malonyl-CoA from acetyl-CoA: step 1/1. In terms of biological role, component of the acetyl coenzyme A carboxylase (ACC) complex. Biotin carboxylase (BC) catalyzes the carboxylation of biotin on its carrier protein (BCCP) and then the CO(2) group is transferred by the transcarboxylase to acetyl-CoA to form malonyl-CoA. This chain is Acetyl-coenzyme A carboxylase carboxyl transferase subunit beta, found in Clostridium perfringens (strain 13 / Type A).